A 206-amino-acid polypeptide reads, in one-letter code: Ion-translocating oxidoreductase complex subunit G (206 aa).

The chain crosses the membrane as a helical span at residues 9–29 (GITLALFAAGSTGLTAVINQM). An FMN phosphoryl threonine modification is found at Thr-174.

The protein belongs to the RnfG family. In terms of assembly, the complex is composed of six subunits: RsxA, RsxB, RsxC, RsxD, RsxE and RsxG. FMN is required as a cofactor.

The protein resides in the cell inner membrane. In terms of biological role, part of a membrane-bound complex that couples electron transfer with translocation of ions across the membrane. Required to maintain the reduced state of SoxR. This Salmonella typhi protein is Ion-translocating oxidoreductase complex subunit G.